A 462-amino-acid polypeptide reads, in one-letter code: Squalene synthase ERG9 (462 aa).

The helical transmembrane segment at 406-426 (AVVLFGVVIAALVCISGLMLG) threads the bilayer.

This sequence belongs to the phytoene/squalene synthase family. Requires Mg(2+) as cofactor.

It is found in the endoplasmic reticulum membrane. The protein localises to the microsome. It carries out the reaction 2 (2E,6E)-farnesyl diphosphate + NADPH + H(+) = squalene + 2 diphosphate + NADP(+). The enzyme catalyses 2 (2E,6E)-farnesyl diphosphate + NADH + H(+) = squalene + 2 diphosphate + NAD(+). Its pathway is terpene metabolism; lanosterol biosynthesis; lanosterol from farnesyl diphosphate: step 1/3. It functions in the pathway steroid metabolism; ergosterol biosynthesis. In terms of biological role, squalene synthase; part of the third module of ergosterol biosynthesis pathway that includes the late steps of the pathway. ERG9 produces squalene from 2 farnesyl pyrophosphate moieties. The third module or late pathway involves the ergosterol synthesis itself through consecutive reactions that mainly occur in the endoplasmic reticulum (ER) membrane. Firstly, the squalene synthase ERG9 catalyzes the condensation of 2 farnesyl pyrophosphate moieties to form squalene, which is the precursor of all steroids. Squalene synthase is crucial for balancing the incorporation of farnesyl diphosphate (FPP) into sterol and nonsterol isoprene synthesis. Secondly, squalene is converted into lanosterol by the consecutive action of the squalene epoxidase ERG1 and the lanosterol synthase ERG7. Then, the delta(24)-sterol C-methyltransferase ERG6 methylates lanosterol at C-24 to produce eburicol. Eburicol is the substrate of the sterol 14-alpha demethylase encoded by CYP51A, CYP51B and CYP51C, to yield 4,4,24-trimethyl ergosta-8,14,24(28)-trienol. CYP51B encodes the enzyme primarily responsible for sterol 14-alpha-demethylation, and plays an essential role in ascospore formation. CYP51A encodes an additional sterol 14-alpha-demethylase, induced on ergosterol depletion and responsible for the intrinsic variation in azole sensitivity. The third CYP51 isoform, CYP51C, does not encode a sterol 14-alpha-demethylase, but is required for full virulence on host wheat ears. The C-14 reductase ERG24 then reduces the C14=C15 double bond which leads to 4,4-dimethylfecosterol. A sequence of further demethylations at C-4, involving the C-4 demethylation complex containing the C-4 methylsterol oxidases ERG25, the sterol-4-alpha-carboxylate 3-dehydrogenase ERG26 and the 3-keto-steroid reductase ERG27, leads to the production of fecosterol via 4-methylfecosterol. ERG28 has a role as a scaffold to help anchor ERG25, ERG26 and ERG27 to the endoplasmic reticulum. The C-8 sterol isomerase ERG2 then catalyzes the reaction which results in unsaturation at C-7 in the B ring of sterols and thus converts fecosterol to episterol. The sterol-C5-desaturases ERG3A and ERG3BB then catalyze the introduction of a C-5 double bond in the B ring to produce 5-dehydroepisterol. The C-22 sterol desaturases ERG5A and ERG5B further convert 5-dehydroepisterol into ergosta-5,7,22,24(28)-tetraen-3beta-ol by forming the C-22(23) double bond in the sterol side chain. Finally, ergosta-5,7,22,24(28)-tetraen-3beta-ol is substrate of the C-24(28) sterol reductase ERG4 to produce ergosterol. The chain is Squalene synthase ERG9 from Gibberella zeae (strain ATCC MYA-4620 / CBS 123657 / FGSC 9075 / NRRL 31084 / PH-1) (Wheat head blight fungus).